The sequence spans 912 residues: Protein translocase subunit SecA (912 aa).

Residues Q86, 104 to 108, and D494 each bind ATP; that span reads GEGKT. The interval 860–912 is disordered; that stretch reads EAPEKPAQLQYTAPGEDGASQTRVEGRSSGRSGNPAKAAQDGARKPAPKKKKR.

This sequence belongs to the SecA family. Monomer and homodimer. Part of the essential Sec protein translocation apparatus which comprises SecA, SecYEG and auxiliary proteins SecDF. Other proteins may also be involved.

The protein resides in the cell membrane. It is found in the cytoplasm. The enzyme catalyses ATP + H2O + cellular proteinSide 1 = ADP + phosphate + cellular proteinSide 2.. Part of the Sec protein translocase complex. Interacts with the SecYEG preprotein conducting channel. Has a central role in coupling the hydrolysis of ATP to the transfer of proteins into and across the cell membrane, serving as an ATP-driven molecular motor driving the stepwise translocation of polypeptide chains across the membrane. This is Protein translocase subunit SecA from Arthrobacter sp. (strain FB24).